Here is a 362-residue protein sequence, read N- to C-terminus: tRNA N6-adenosine threonylcarbamoyltransferase (362 aa).

Residues His116 and His120 each contribute to the Fe cation site. Residues 138-142, Asp171, Gly184, and Asn284 each bind substrate; that span reads LVSGG. Asp312 provides a ligand contact to Fe cation.

This sequence belongs to the KAE1 / TsaD family. Requires Fe(2+) as cofactor.

It is found in the cytoplasm. It carries out the reaction L-threonylcarbamoyladenylate + adenosine(37) in tRNA = N(6)-L-threonylcarbamoyladenosine(37) in tRNA + AMP + H(+). Its function is as follows. Required for the formation of a threonylcarbamoyl group on adenosine at position 37 (t(6)A37) in tRNAs that read codons beginning with adenine. Is involved in the transfer of the threonylcarbamoyl moiety of threonylcarbamoyl-AMP (TC-AMP) to the N6 group of A37, together with TsaE and TsaB. TsaD likely plays a direct catalytic role in this reaction. The protein is tRNA N6-adenosine threonylcarbamoyltransferase of Chelativorans sp. (strain BNC1).